The primary structure comprises 132 residues: Small ribosomal subunit protein eS12 (132 aa).

Residue A2 is modified to N-acetylalanine. K129 is subject to N6-succinyllysine.

This sequence belongs to the eukaryotic ribosomal protein eS12 family. Part of the small subunit (SSU) processome, composed of more than 70 proteins and the RNA chaperone small nucleolar RNA (snoRNA) U3. Subunit of the 40S ribosomal complex.

The protein localises to the nucleus. It is found in the nucleolus. Its function is as follows. Part of the small subunit (SSU) processome, first precursor of the small eukaryotic ribosomal subunit. During the assembly of the SSU processome in the nucleolus, many ribosome biogenesis factors, an RNA chaperone and ribosomal proteins associate with the nascent pre-rRNA and work in concert to generate RNA folding, modifications, rearrangements and cleavage as well as targeted degradation of pre-ribosomal RNA by the RNA exosome. Subunit of the 40S ribosomal complex. This chain is Small ribosomal subunit protein eS12 (Rps12), found in Mus musculus (Mouse).